A 357-amino-acid chain; its full sequence is Cyclin-dependent kinase-like 1 (357 aa).

The Protein kinase domain occupies Tyr-4–Phe-287. ATP-binding positions include Ile-10 to Val-18 and Lys-33. A [NKR]KIAxRE motif is present at residues Lys-45–Glu-51. Residue Asp-126 is the Proton acceptor of the active site.

The protein belongs to the protein kinase superfamily. CMGC Ser/Thr protein kinase family. CDC2/CDKX subfamily. In terms of tissue distribution, highly expressed in kidney, and to a lower extent in ovary.

It localises to the cytoplasm. The protein localises to the nucleus. The catalysed reaction is L-seryl-[protein] + ATP = O-phospho-L-seryl-[protein] + ADP + H(+). The enzyme catalyses L-threonyl-[protein] + ATP = O-phospho-L-threonyl-[protein] + ADP + H(+). The sequence is that of Cyclin-dependent kinase-like 1 from Homo sapiens (Human).